The chain runs to 389 residues: Phosphopentomutase (389 aa).

Positions 12, 284, 289, 325, 326, and 337 each coordinate Mn(2+).

This sequence belongs to the phosphopentomutase family. Mn(2+) is required as a cofactor.

The protein localises to the cytoplasm. It catalyses the reaction 2-deoxy-alpha-D-ribose 1-phosphate = 2-deoxy-D-ribose 5-phosphate. It carries out the reaction alpha-D-ribose 1-phosphate = D-ribose 5-phosphate. The protein operates within carbohydrate degradation; 2-deoxy-D-ribose 1-phosphate degradation; D-glyceraldehyde 3-phosphate and acetaldehyde from 2-deoxy-alpha-D-ribose 1-phosphate: step 1/2. Functionally, isomerase that catalyzes the conversion of deoxy-ribose 1-phosphate (dRib-1-P) and ribose 1-phosphate (Rib-1-P) to deoxy-ribose 5-phosphate (dRib-5-P) and ribose 5-phosphate (Rib-5-P), respectively. This chain is Phosphopentomutase, found in Anaeromyxobacter sp. (strain Fw109-5).